Reading from the N-terminus, the 366-residue chain is Aminomethyltransferase (366 aa).

Belongs to the GcvT family. The glycine cleavage system is composed of four proteins: P, T, L and H.

The enzyme catalyses N(6)-[(R)-S(8)-aminomethyldihydrolipoyl]-L-lysyl-[protein] + (6S)-5,6,7,8-tetrahydrofolate = N(6)-[(R)-dihydrolipoyl]-L-lysyl-[protein] + (6R)-5,10-methylene-5,6,7,8-tetrahydrofolate + NH4(+). The glycine cleavage system catalyzes the degradation of glycine. This is Aminomethyltransferase from Bacillus velezensis (strain DSM 23117 / BGSC 10A6 / LMG 26770 / FZB42) (Bacillus amyloliquefaciens subsp. plantarum).